The sequence spans 135 residues: Small ribosomal subunit protein bS6 (135 aa).

The tract at residues Phe-104 to Glu-135 is disordered.

It belongs to the bacterial ribosomal protein bS6 family.

Binds together with bS18 to 16S ribosomal RNA. This is Small ribosomal subunit protein bS6 from Bartonella henselae (strain ATCC 49882 / DSM 28221 / CCUG 30454 / Houston 1) (Rochalimaea henselae).